The primary structure comprises 661 residues: uncharacterized protein (661 aa).

The next 7 membrane-spanning stretches (helical) occupy residues 37–57 (VFLG…LFLS), 87–107 (INSP…AVFI), 120–140 (WLLL…NVIL), 158–178 (VFWQ…PIIV), 243–263 (LLDI…LYTI), 266–286 (TLMW…IAIG), and 341–361 (FNLL…YNYF). Residues 123-410 (LGVLLSLLFV…VTNQIQNITE (288 aa)) form the ABC transmembrane type-1 domain. One can recognise an ABC transporter domain in the interval 453–659 (VALENVTLSP…AEGRWQISPI (207 aa)). 487–494 (GPSGSGKS) is a binding site for ATP.

Belongs to the ABC transporter superfamily.

The protein resides in the cell inner membrane. This is an uncharacterized protein from Synechocystis sp. (strain ATCC 27184 / PCC 6803 / Kazusa).